We begin with the raw amino-acid sequence, 374 residues long: Ferroptosis suppressor protein 1 (374 aa).

The N-myristoyl glycine moiety is linked to residue G2. The chain crosses the membrane as a helical span at residues 13 to 35 (VVIVGGGFAGIAAATQLKSFGIP). 6-hydroxy-FAD contacts are provided by residues 17–21 (GGGFA), R53, and V81. K167 bears the N6-acetyllysine mark. D285 contributes to the 6-hydroxy-FAD binding site.

Belongs to the FAD-dependent oxidoreductase family. It depends on 6-hydroxy-FAD as a cofactor. Post-translationally, N-myristoylation at Gly-2 mediates the recruitment to lipid droplets and plasma membrane. In terms of processing, acetylation at Lys-167 prevents AIFM2 ubiquitination and degradation, thereby inhibiting ferroptosis. KAT2B mediates acetylation at Lys-167, while HDAC3 removes it. Ubiquitinated. AIFM2 undergoes 'Lys-29'-ubiquitination and proteasomal degradation, which is inhibited by acetylation at Lys-167.

It is found in the lipid droplet. Its subcellular location is the cell membrane. It localises to the cytoplasm. The protein resides in the mitochondrion membrane. The protein localises to the nucleus. It catalyses the reaction ubiquinone-10 + NADH + H(+) = ubiquinol-10 + NAD(+). The enzyme catalyses phylloquinone + NADH + H(+) = phylloquinol + NAD(+). It carries out the reaction menaquinone-4 + NADH + H(+) = menaquinol-4 + NAD(+). The catalysed reaction is menadione + NADH + H(+) = menadiol + NAD(+). Its activity is regulated as follows. The modification by 4-hydroxy-2-nonenal (HNE) adduction in mitochondria results in loss of the oxidoreductase activity and activation of a novel function in mitochondrial oxidative stress signaling. An NAD(P)H-dependent oxidoreductase that acts as a key inhibitor of ferroptosis. At the plasma membrane, catalyzes reduction of coenzyme Q/ubiquinone-10 to ubiquinol-10, a lipophilic radical-trapping antioxidant that prevents lipid oxidative damage and consequently ferroptosis. Acts in parallel to GPX4 to suppress phospholipid peroxidation and ferroptosis. This anti-ferroptotic function is independent of cellular glutathione levels. Also acts as a potent radical-trapping antioxidant by mediating warfarin-resistant vitamin K reduction in the canonical vitamin K cycle: catalyzes NAD(P)H-dependent reduction of vitamin K (phylloquinone, menaquinone-4 and menadione) to hydroquinone forms. Hydroquinones act as potent radical-trapping antioxidants inhibitor of phospholipid peroxidation and ferroptosis. May play a role in mitochondrial stress signaling. Upon oxidative stress, associates with the lipid peroxidation end product 4-hydroxy-2-nonenal (HNE) forming a lipid adduct devoid of oxidoreductase activity, which then translocates from mitochondria into the nucleus triggering DNA damage and cell death. This chain is Ferroptosis suppressor protein 1 (aifm2), found in Xenopus tropicalis (Western clawed frog).